The chain runs to 333 residues: Protoheme IX farnesyltransferase (333 aa).

The next 8 membrane-spanning stretches (helical) occupy residues 36–56, 61–81, 107–127, 130–150, 158–178, 186–206, 243–263, and 284–304; these read LIPLLLATTLGGMALTEGWPL, LVCTLGGGALAAAAAGVLNCL, AAFAGAVSCALAAATLLVSGV, LAAGLSLLGLCSYVLLYTALL, IVIGGVAGAIPPLVGAAAATG, WLFALVMVWTPAHFWALALLL, FLGVWALPEGGLLYGLLLLPF, and AKGLFRWSILYLFGICLLLVF.

Belongs to the UbiA prenyltransferase family. Protoheme IX farnesyltransferase subfamily.

Its subcellular location is the cell inner membrane. The enzyme catalyses heme b + (2E,6E)-farnesyl diphosphate + H2O = Fe(II)-heme o + diphosphate. It functions in the pathway porphyrin-containing compound metabolism; heme O biosynthesis; heme O from protoheme: step 1/1. Converts heme B (protoheme IX) to heme O by substitution of the vinyl group on carbon 2 of heme B porphyrin ring with a hydroxyethyl farnesyl side group. The chain is Protoheme IX farnesyltransferase from Synechococcus sp. (strain WH7803).